A 157-amino-acid polypeptide reads, in one-letter code: Cyclic pyranopterin monophosphate synthase (157 aa).

Substrate is bound by residues 74-76 (MCH) and 112-113 (ME). Asp-127 is an active-site residue.

It belongs to the MoaC family. As to quaternary structure, homohexamer; trimer of dimers.

It catalyses the reaction (8S)-3',8-cyclo-7,8-dihydroguanosine 5'-triphosphate = cyclic pyranopterin phosphate + diphosphate. The protein operates within cofactor biosynthesis; molybdopterin biosynthesis. In terms of biological role, catalyzes the conversion of (8S)-3',8-cyclo-7,8-dihydroguanosine 5'-triphosphate to cyclic pyranopterin monophosphate (cPMP). This chain is Cyclic pyranopterin monophosphate synthase, found in Campylobacter lari (strain RM2100 / D67 / ATCC BAA-1060).